Consider the following 205-residue polypeptide: Imidazole glycerol phosphate synthase subunit HisH (205 aa).

Positions 3 to 205 (KIGLIDYGMG…LLRRWLSNIQ (203 aa)) constitute a Glutamine amidotransferase type-1 domain. C81 serves as the catalytic Nucleophile. Catalysis depends on residues H185 and E187.

As to quaternary structure, heterodimer of HisH and HisF.

The protein resides in the cytoplasm. It carries out the reaction 5-[(5-phospho-1-deoxy-D-ribulos-1-ylimino)methylamino]-1-(5-phospho-beta-D-ribosyl)imidazole-4-carboxamide + L-glutamine = D-erythro-1-(imidazol-4-yl)glycerol 3-phosphate + 5-amino-1-(5-phospho-beta-D-ribosyl)imidazole-4-carboxamide + L-glutamate + H(+). It catalyses the reaction L-glutamine + H2O = L-glutamate + NH4(+). It functions in the pathway amino-acid biosynthesis; L-histidine biosynthesis; L-histidine from 5-phospho-alpha-D-ribose 1-diphosphate: step 5/9. In terms of biological role, IGPS catalyzes the conversion of PRFAR and glutamine to IGP, AICAR and glutamate. The HisH subunit catalyzes the hydrolysis of glutamine to glutamate and ammonia as part of the synthesis of IGP and AICAR. The resulting ammonia molecule is channeled to the active site of HisF. This Prochlorococcus marinus (strain MIT 9312) protein is Imidazole glycerol phosphate synthase subunit HisH.